We begin with the raw amino-acid sequence, 599 residues long: Vitamin B12-dependent ribonucleotide reductase (599 aa).

Position 193 to 197 (193 to 197) interacts with substrate; the sequence is PTGTI. Positions 519 to 555 are disordered; sequence LAQSAPRQAGPAKAATTAPAAKAQEPAAAPSPKQAHN. The span at 526–553 shows a compositional bias: low complexity; that stretch reads QAGPAKAATTAPAAKAQEPAAAPSPKQA.

This sequence belongs to the ribonucleoside diphosphate reductase class-2 family. Adenosylcob(III)alamin is required as a cofactor.

The enzyme catalyses a 2'-deoxyribonucleoside 5'-diphosphate + [thioredoxin]-disulfide + H2O = a ribonucleoside 5'-diphosphate + [thioredoxin]-dithiol. Catalyzes the reduction of ribonucleotides to deoxyribonucleotides. May function to provide a pool of deoxyribonucleotide precursors for DNA repair during oxygen limitation and/or for immediate growth after restoration of oxygen. This chain is Vitamin B12-dependent ribonucleotide reductase (nrdJ), found in Streptantibioticus cattleyicolor (Streptomyces cattleya).